The sequence spans 289 residues: Bidirectional sugar transporter SWEET11 (289 aa).

The Extracellular segment spans residues 1–9; it reads MSLFNTENT. The helical transmembrane segment at 10–30 threads the bilayer; sequence WAFVFGLLGNLISFAVFLSPV. Residues 12-98 form the MtN3/slv 1 domain; that stretch reads FVFGLLGNLI…SMFLAYAPKP (87 aa). The Cytoplasmic portion of the chain corresponds to 31–43; it reads PTFYRIWKKKTTE. A helical transmembrane segment spans residues 44–64; sequence GFQSIPYVVALFSATLWLYYA. At 65–70 the chain is on the extracellular side; the sequence is TQKKDV. Residues 71-91 form a helical membrane-spanning segment; it reads FLLVTINAFGCFIETIYISMF. Over 92–105 the chain is Cytoplasmic; sequence LAYAPKPARMLTVK. The chain crosses the membrane as a helical span at residues 106–126; sequence MLLLMNFGGFCAILLLCQFLV. Over 127 to 133 the chain is Extracellular; it reads KGATRAK. The helical transmembrane segment at 134 to 154 threads the bilayer; sequence IIGGICVGFSVCVFAAPLSII. In terms of domain architecture, MtN3/slv 2 spans 134-218; sequence IIGGICVGFS…ILYVVYKYCK (85 aa). At 155-167 the chain is on the cytoplasmic side; sequence RTVIKTRSVEYMP. A helical transmembrane segment spans residues 168-188; the sequence is FSLSLTLTISAVIWLLYGLAL. Over 189–192 the chain is Extracellular; the sequence is KDIY. The chain crosses the membrane as a helical span at residues 193–213; that stretch reads VAFPNVLGFALGALQMILYVV. The Cytoplasmic portion of the chain corresponds to 214–289; the sequence is YKYCKTSPHL…GKQSSSAAAT (76 aa). The interval 266–289 is disordered; it reads DRRAEIEDGQTPKHGKQSSSAAAT. Position 276 is a phosphothreonine (threonine 276).

The protein belongs to the SWEET sugar transporter family. Forms homooligomers and heterooligomers with SWEET1, SWEET3, SWEET5, SWEET6, SWEET7, SWEET8, SWEET9, SWEET12, SWEET13, SWEET15 and SWEET17. Expressed in leaves, especially in phloem. Expressed in developing seeds.

Its subcellular location is the cell membrane. Functionally, mediates both low-affinity uptake and efflux of sugar across the plasma membrane. Involved in phloem loading by mediating export from parenchyma cells feeding H(+)-coupled import into the sieve element/companion cell complex, thus contributing to the sucrose migration from sites of synthesis in the mesophyll to the phloem. Contributes to seed filling by triggering sucrose efflux involved in the transfer of sugars from seed coat to embryos. This chain is Bidirectional sugar transporter SWEET11, found in Arabidopsis thaliana (Mouse-ear cress).